The primary structure comprises 251 residues: Adenosylcobinamide-GDP ribazoletransferase (251 aa).

Helical transmembrane passes span 36 to 56, 60 to 80, 110 to 130, 141 to 161, 181 to 201, 202 to 222, and 231 to 251; these read LYPF…FVLS, VPIM…TGFL, VGAF…AGMF, VLIF…VSQE, EIIL…TLGI, NYLI…LKVK, and DVAG…LGII.

This sequence belongs to the CobS family. It depends on Mg(2+) as a cofactor.

It is found in the cell membrane. The catalysed reaction is alpha-ribazole + adenosylcob(III)inamide-GDP = adenosylcob(III)alamin + GMP + H(+). It catalyses the reaction alpha-ribazole 5'-phosphate + adenosylcob(III)inamide-GDP = adenosylcob(III)alamin 5'-phosphate + GMP + H(+). Its pathway is cofactor biosynthesis; adenosylcobalamin biosynthesis; adenosylcobalamin from cob(II)yrinate a,c-diamide: step 7/7. Its function is as follows. Joins adenosylcobinamide-GDP and alpha-ribazole to generate adenosylcobalamin (Ado-cobalamin). Also synthesizes adenosylcobalamin 5'-phosphate from adenosylcobinamide-GDP and alpha-ribazole 5'-phosphate. The sequence is that of Adenosylcobinamide-GDP ribazoletransferase from Clostridium perfringens (strain 13 / Type A).